Reading from the N-terminus, the 842-residue chain is CRM-domain containing factor CFM3, chloroplastic/mitochondrial (842 aa).

The transit peptide at M1–L82 directs the protein to the chloroplast and mitochondrion. 3 disordered regions span residues A49 to M80, R141 to S160, and V254 to E290. The CRM 1 domain occupies L167 to K263. Polar residues predominate over residues G280 to E290. CRM domains follow at residues P371–E468 and E582–R682. Positions Q703 to Q732 form a coiled coil. The interval V768–Y842 is disordered. Residues D786–A812 are compositionally biased toward acidic residues. Positions D831–Y842 are enriched in basic and acidic residues.

Interacts with RNA. Part of large ribonucleo-protein particles that contain CAF1 and/or CAF2, and RNC1.

Its subcellular location is the plastid. The protein localises to the chloroplast stroma. It localises to the mitochondrion. Binds specific group II introns in chloroplasts and facilitates their splicing. Acts on subgroup IIB introns. The substrates of the subgroup IIB also require the CRM domain proteins CAF1 or CAF2, with a simultaneous binding of CFM3 and CAF1 or CAF2. May influence the biogenesis of the mitochondrial small ribosomal subunit. The protein is CRM-domain containing factor CFM3, chloroplastic/mitochondrial of Zea mays (Maize).